The chain runs to 333 residues: Beta-ketoacyl-[acyl-carrier-protein] synthase III (333 aa).

Catalysis depends on residues Cys-114 and His-255. Residues 256-260 (QANYR) form an ACP-binding region. Asn-285 is an active-site residue.

Belongs to the thiolase-like superfamily. FabH family. Homodimer.

Its subcellular location is the cytoplasm. It catalyses the reaction malonyl-[ACP] + acetyl-CoA + H(+) = 3-oxobutanoyl-[ACP] + CO2 + CoA. Its pathway is lipid metabolism; fatty acid biosynthesis. In terms of biological role, catalyzes the condensation reaction of fatty acid synthesis by the addition to an acyl acceptor of two carbons from malonyl-ACP. Catalyzes the first condensation reaction which initiates fatty acid synthesis and may therefore play a role in governing the total rate of fatty acid production. Possesses both acetoacetyl-ACP synthase and acetyl transacylase activities. Its substrate specificity determines the biosynthesis of branched-chain and/or straight-chain of fatty acids. The sequence is that of Beta-ketoacyl-[acyl-carrier-protein] synthase III from Aliarcobacter butzleri (strain RM4018) (Arcobacter butzleri).